The following is a 522-amino-acid chain: Lysophospholipid acyltransferase LPCAT4 (522 aa).

2 helical membrane-spanning segments follow: residues 43–63 (ILGF…LFLM) and 92–112 (HLIY…WITI). An HXXXXD motif motif is present at residues 130 to 135 (HSTFFD). 2 N-linked (GlcNAc...) asparagine glycosylation sites follow: Asn-166 and Asn-517. The disordered stretch occupies residues 496-522 (GRRKPPHIQQNGGCSGKNNPRNQSKMD). The span at 503 to 522 (IQQNGGCSGKNNPRNQSKMD) shows a compositional bias: polar residues.

It belongs to the 1-acyl-sn-glycerol-3-phosphate acyltransferase family.

The protein localises to the endoplasmic reticulum membrane. It carries out the reaction a 1-acyl-sn-glycero-3-phosphoethanolamine + an acyl-CoA = a 1,2-diacyl-sn-glycero-3-phosphoethanolamine + CoA. The enzyme catalyses a 1-O-(1Z-alkenyl)-sn-glycero-3-phosphoethanolamine + an acyl-CoA = a 1-O-(1Z-alkenyl)-2-acyl-sn-glycero-3-phosphoethanolamine + CoA. The catalysed reaction is a 1-acyl-sn-glycero-3-phosphocholine + an acyl-CoA = a 1,2-diacyl-sn-glycero-3-phosphocholine + CoA. It catalyses the reaction a 1-O-alkyl-sn-glycero-3-phosphocholine + acetyl-CoA = a 1-O-alkyl-2-acetyl-sn-glycero-3-phosphocholine + CoA. It carries out the reaction a 1-acyl-sn-glycero-3-phospho-L-serine + an acyl-CoA = a 1,2-diacyl-sn-glycero-3-phospho-L-serine + CoA. It functions in the pathway lipid metabolism; phospholipid metabolism. In terms of biological role, displays acyl-CoA-dependent lysophospholipid acyltransferase activity with a subset of lysophospholipids as substrates. Prefers long chain acyl-CoAs (C16, C18) as acyl donors. This is Lysophospholipid acyltransferase LPCAT4 (lpcat4) from Xenopus tropicalis (Western clawed frog).